Here is a 200-residue protein sequence, read N- to C-terminus: dITP/XTP pyrophosphatase (200 aa).

8–13 (TGNQGK) is a binding site for substrate. The active-site Proton acceptor is the aspartate 69. Aspartate 69 is a binding site for Mg(2+). Substrate is bound by residues serine 70, 154–157 (FGYD), lysine 177, and 182–183 (HR).

Belongs to the HAM1 NTPase family. As to quaternary structure, homodimer. Mg(2+) serves as cofactor.

The catalysed reaction is XTP + H2O = XMP + diphosphate + H(+). The enzyme catalyses dITP + H2O = dIMP + diphosphate + H(+). It carries out the reaction ITP + H2O = IMP + diphosphate + H(+). Pyrophosphatase that catalyzes the hydrolysis of nucleoside triphosphates to their monophosphate derivatives, with a high preference for the non-canonical purine nucleotides XTP (xanthosine triphosphate), dITP (deoxyinosine triphosphate) and ITP. Seems to function as a house-cleaning enzyme that removes non-canonical purine nucleotides from the nucleotide pool, thus preventing their incorporation into DNA/RNA and avoiding chromosomal lesions. In Vibrio parahaemolyticus serotype O3:K6 (strain RIMD 2210633), this protein is dITP/XTP pyrophosphatase.